The sequence spans 89 residues: Small ribosomal subunit protein uS15 (89 aa).

It belongs to the universal ribosomal protein uS15 family. As to quaternary structure, part of the 30S ribosomal subunit. Forms a bridge to the 50S subunit in the 70S ribosome, contacting the 23S rRNA.

Functionally, one of the primary rRNA binding proteins, it binds directly to 16S rRNA where it helps nucleate assembly of the platform of the 30S subunit by binding and bridging several RNA helices of the 16S rRNA. Its function is as follows. Forms an intersubunit bridge (bridge B4) with the 23S rRNA of the 50S subunit in the ribosome. This chain is Small ribosomal subunit protein uS15, found in Salmonella schwarzengrund (strain CVM19633).